The following is a 170-amino-acid chain: Transcription factor E (170 aa).

An HTH TFE/IIEalpha-type domain is found at 1 to 93; the sequence is MKDVYLYIVE…TWYVNDEVIS (93 aa).

The protein belongs to the TFE family. As to quaternary structure, monomer. Interaction with RNA polymerase subunits RpoF and RpoE is necessary for Tfe stimulatory transcription activity. Able to interact with Tbp and RNA polymerase in the absence of DNA promoter. Interacts both with the preinitiation and elongation complexes.

Transcription factor that plays a role in the activation of archaeal genes transcribed by RNA polymerase. Facilitates transcription initiation by enhancing TATA-box recognition by TATA-box-binding protein (Tbp), and transcription factor B (Tfb) and RNA polymerase recruitment. Not absolutely required for transcription in vitro, but particularly important in cases where Tbp or Tfb function is not optimal. It dynamically alters the nucleic acid-binding properties of RNA polymerases by stabilizing the initiation complex and destabilizing elongation complexes. Seems to translocate with the RNA polymerase following initiation and acts by binding to the non template strand of the transcription bubble in elongation complexes. The polypeptide is Transcription factor E (Pyrobaculum calidifontis (strain DSM 21063 / JCM 11548 / VA1)).